A 134-amino-acid chain; its full sequence is MNSTIIDDPIVTIKTLSKQFQTRYSTIENCNELTKLIDKSTNCITGLTNDEFIEVLLNYLRNNYSEEDLIKFANDFKLLGINIEMDGYVFVNIGGKIFFLSKNFLTHNFNYFESFFKNYQQCDPDYSADHLKDM.

This is an uncharacterized protein from Acanthamoeba polyphaga (Amoeba).